The primary structure comprises 151 residues: Deoxyuridine 5'-triphosphate nucleotidohydrolase (151 aa).

Residues 70–72 (RSG), N83, 87–89 (LID), and M97 contribute to the substrate site.

Belongs to the dUTPase family. As to quaternary structure, homotrimer. Mg(2+) serves as cofactor.

It carries out the reaction dUTP + H2O = dUMP + diphosphate + H(+). It functions in the pathway pyrimidine metabolism; dUMP biosynthesis; dUMP from dCTP (dUTP route): step 2/2. In terms of biological role, this enzyme is involved in nucleotide metabolism: it produces dUMP, the immediate precursor of thymidine nucleotides and it decreases the intracellular concentration of dUTP so that uracil cannot be incorporated into DNA. The sequence is that of Deoxyuridine 5'-triphosphate nucleotidohydrolase from Escherichia coli O45:K1 (strain S88 / ExPEC).